Here is a 403-residue protein sequence, read N- to C-terminus: uncharacterized protein (403 aa).

The next 12 helical transmembrane spans lie at 25 to 47 (IAFF…ILFL), 62 to 81 (SLSA…GPLS), 88 to 110 (VVMS…MNSW), 114 to 136 (IFMR…TYLS), 143 to 165 (VLSF…GRFL), 175 to 197 (WNIA…VYLL), 229 to 251 (LFFM…GYRL), 256 to 278 (FFLG…YSSP), 290 to 307 (GVIL…VLIT), 311 to 330 (IVLL…FAAH), 350 to 372 (SIYL…IFWI), and 376 to 398 (WLGI…IRLL).

The protein belongs to the major facilitator superfamily.

It localises to the cell membrane. This is an uncharacterized protein from Buchnera aphidicola subsp. Baizongia pistaciae (strain Bp).